We begin with the raw amino-acid sequence, 197 residues long: 7-methyl-GTP pyrophosphatase (197 aa).

Asp69 functions as the Proton acceptor in the catalytic mechanism.

This sequence belongs to the Maf family. YceF subfamily. The cofactor is a divalent metal cation.

It is found in the cytoplasm. It carries out the reaction N(7)-methyl-GTP + H2O = N(7)-methyl-GMP + diphosphate + H(+). In terms of biological role, nucleoside triphosphate pyrophosphatase that hydrolyzes 7-methyl-GTP (m(7)GTP). May have a dual role in cell division arrest and in preventing the incorporation of modified nucleotides into cellular nucleic acids. This chain is 7-methyl-GTP pyrophosphatase, found in Syntrophotalea carbinolica (strain DSM 2380 / NBRC 103641 / GraBd1) (Pelobacter carbinolicus).